We begin with the raw amino-acid sequence, 311 residues long: S-adenosyl-L-methionine-dependent tRNA 4-demethylwyosine synthase (311 aa).

6 residues coordinate [4Fe-4S] cluster: Cys-26, Cys-39, Cys-52, Cys-62, Cys-66, and Cys-69. The region spanning 45-283 (YGIETHRCIQ…LKLAKMLDEN (239 aa)) is the Radical SAM core domain.

Belongs to the TYW1 family. As to quaternary structure, monomer. [4Fe-4S] cluster serves as cofactor.

The protein localises to the cytoplasm. It carries out the reaction N(1)-methylguanosine(37) in tRNA(Phe) + pyruvate + S-adenosyl-L-methionine = 4-demethylwyosine(37) in tRNA(Phe) + 5'-deoxyadenosine + L-methionine + CO2 + H2O. Its function is as follows. Component of the wyosine derivatives biosynthesis pathway that catalyzes the condensation of N-methylguanine with 2 carbon atoms from pyruvate to form the tricyclic 4-demethylwyosine (imG-14) on guanosine-37 of tRNA(Phe). The sequence is that of S-adenosyl-L-methionine-dependent tRNA 4-demethylwyosine synthase from Methanocaldococcus jannaschii (strain ATCC 43067 / DSM 2661 / JAL-1 / JCM 10045 / NBRC 100440) (Methanococcus jannaschii).